The following is a 76-amino-acid chain: Membrane protein UL43 homolog (76 aa).

2 helical membrane-spanning segments follow: residues alanine 7 to phenylalanine 27 and isoleucine 54 to isoleucine 74.

The protein belongs to the alphaherpesvirinae HHV-1 UL43 family.

The protein localises to the membrane. The chain is Membrane protein UL43 homolog from Equus caballus (Horse).